A 587-amino-acid chain; its full sequence is Barrierpepsin (587 aa).

Positions M1–A24 are cleaved as a signal peptide. In terms of domain architecture, Peptidase A1 spans Y45–A393. D63 is a catalytic residue. N-linked (GlcNAc...) asparagine glycosylation is found at N84, N90, and N268. D287 is an active-site residue. A glycan (N-linked (GlcNAc...) asparagine) is linked at N308. The cysteines at positions 322 and 358 are disulfide-linked. Residues N366, N398, N468, N503, and N551 are each glycosylated (N-linked (GlcNAc...) asparagine). The interval S466–T505 is disordered.

It belongs to the peptidase A1 family.

Its subcellular location is the secreted. The enzyme catalyses Selective cleavage of 6-Leu-|-Lys-7 bond in the pheromone alpha-mating factor.. This protein called 'barrier activity' is excreted by yeast cells mating type a. It is probably a protease that cleaves alpha-factor and thus acts as an antagonist of this mating pheromone and establishes optimal pheromone concentration for conjugation. The sequence is that of Barrierpepsin (BAR1) from Saccharomyces cerevisiae (strain ATCC 204508 / S288c) (Baker's yeast).